We begin with the raw amino-acid sequence, 279 residues long: Putative phosphoenolpyruvate synthase regulatory protein (279 aa).

Position 159–166 (159–166) interacts with ADP; sequence GVSRSGKT.

It belongs to the pyruvate, phosphate/water dikinase regulatory protein family. PSRP subfamily.

The enzyme catalyses [pyruvate, water dikinase] + ADP = [pyruvate, water dikinase]-phosphate + AMP + H(+). It catalyses the reaction [pyruvate, water dikinase]-phosphate + phosphate + H(+) = [pyruvate, water dikinase] + diphosphate. Bifunctional serine/threonine kinase and phosphorylase involved in the regulation of the phosphoenolpyruvate synthase (PEPS) by catalyzing its phosphorylation/dephosphorylation. The polypeptide is Putative phosphoenolpyruvate synthase regulatory protein (Ralstonia nicotianae (strain ATCC BAA-1114 / GMI1000) (Ralstonia solanacearum)).